The chain runs to 204 residues: Tetraspanin-13 (204 aa).

Over 1-19 (MVCGGFSCSKNCLCALNLL) the chain is Cytoplasmic. A helical membrane pass occupies residues 20–40 (YTLVSLLLIGIAAWGIGFGLI). At 41–44 (SSLR) the chain is on the extracellular side. Residues 45-65 (VVGVVIAVGIFLFLIALVGLI) traverse the membrane as a helical segment. At 66 to 72 (GAVKHHQ) the chain is on the cytoplasmic side. Residues 73–93 (VLLFFYMIILLLVFIVQFSVS) traverse the membrane as a helical segment. Topologically, residues 94–167 (CACLALNREQ…IGEYAGEVLR (74 aa)) are extracellular. 2 N-linked (GlcNAc...) asparagine glycosylation sites follow: Asn113 and Asn137. Ser143 carries the post-translational modification Phosphoserine. Residues 168-188 (FVGGIGLFFSFTEILGVWLTY) form a helical membrane-spanning segment. The Cytoplasmic portion of the chain corresponds to 189–204 (RYRNQKDPRANPSAFL).

The protein belongs to the tetraspanin (TM4SF) family.

Its subcellular location is the membrane. The protein is Tetraspanin-13 (Tspan13) of Rattus norvegicus (Rat).